Consider the following 729-residue polypeptide: Solute carrier family 15 member 2 (729 aa).

The tract at residues 1-34 (MNPFQKNESKETLFSPVSTEEMLPGPPSPPKKST) is disordered. Over 1–57 (MNPFQKNESKETLFSPVSTEEMLPGPPSPPKKSTPKLFGSSYPLSIAFIVVNEFCER) the chain is Cytoplasmic. Serine 9 is subject to Phosphoserine. Phosphothreonine is present on threonine 12. A Phosphoserine modification is found at serine 28. A helical membrane pass occupies residues 58-78 (FSYYGMKAVLTLYFLYFLHWN). The Extracellular segment spans residues 79-87 (EDTSTSVYH). Residues 88–108 (AFSSLCYFTPILGAAIADSWL) form a helical membrane-spanning segment. Residues 109 to 113 (GKFKT) are Cytoplasmic-facing. Residues 114-134 (IIYLSLVYVLGHVFKSLGAIP) form a helical membrane-spanning segment. Over 135–139 (ILGGK) the chain is Extracellular. A helical membrane pass occupies residues 140–160 (MLHTILSLVGLSLIALGTGGI). The Cytoplasmic segment spans residues 161 to 183 (KPCVAAFGGDQFEEEHAEARTRY). The chain crosses the membrane as a helical span at residues 184-204 (FSVFYLSINAGSLISTFITPM). The Extracellular portion of the chain corresponds to 205–217 (LRGDVKCFGEDCY). The helical transmembrane segment at 218 to 238 (ALAFGIPGLLMVLALVVFAMG) threads the bilayer. The Cytoplasmic portion of the chain corresponds to 239-295 (SKMYRKPPPEGNIVAQVTKCIWFAICNRFRNRSEDIPKRQHWLDWAAEKYPKHLIMD). A helical transmembrane segment spans residues 296–316 (VKALTRILFLYIPLPMFWALL). Topologically, residues 317–343 (DQQGSRWTLQANKMDGDLGFFVLQPDQ) are extracellular. Residues 344–364 (MQVLNPFLVLVFIPLFDLVIY) form a helical membrane-spanning segment. The Cytoplasmic portion of the chain corresponds to 365-380 (RLISKCGVNFSSLRKM). The helical transmembrane segment at 381–401 (AVGMILACLAFAVAALVEIKI) threads the bilayer. Topologically, residues 402–611 (NGMIHPQPAS…PANKLSIAWQ (210 aa)) are extracellular. The tract at residues 402–611 (NGMIHPQPAS…PANKLSIAWQ (210 aa)) is extracellular domain (ECD). 4 N-linked (GlcNAc...) asparagine glycosylation sites follow: asparagine 448, asparagine 472, asparagine 528, and asparagine 587. The chain crosses the membrane as a helical span at residues 612–632 (LPQYVLVTAAEVMFSVTGLEF). The Cytoplasmic portion of the chain corresponds to 633–643 (SYSQAPSSMKS). Residues 644-664 (VLQAAWLLTVAVGNIIVLIVA) form a helical membrane-spanning segment. Topologically, residues 665–674 (QFSGLVQWAE) are extracellular. A helical membrane pass occupies residues 675 to 695 (FVLFSCLLLVVCLIFSVMGYY). At 696 to 729 (YVPLKSEGIHEATEKQIPHIQGNMINLETKNTRL) the chain is on the cytoplasmic side.

Belongs to the major facilitator superfamily. Proton-dependent oligopeptide transporter (POT/PTR) (TC 2.A.17) family. As to quaternary structure, interacts (via extracellular domain region) with trypsin. In terms of tissue distribution, expressed in kidney brush border cells (at protein level). Highly expressed in macrophages.

It is found in the apical cell membrane. The protein localises to the cytoplasmic vesicle. The protein resides in the phagosome membrane. It localises to the cell membrane. The enzyme catalyses N-acetyl-D-muramoyl-L-alanyl-D-isoglutamine(out) + 3 H(+)(out) = N-acetyl-D-muramoyl-L-alanyl-D-isoglutamine(in) + 3 H(+)(in). The catalysed reaction is a dipeptide(out) + 2 H(+)(out) = a dipeptide(in) + 2 H(+)(in). It carries out the reaction glycyl-L-leucine(out) + 2 H(+)(out) = glycyl-L-leucine(in) + 2 H(+)(in). It catalyses the reaction glycyl-L-lysine(out) + 2 H(+)(out) = glycyl-L-lysine(in) + 2 H(+)(in). The enzyme catalyses glycyl-L-glutamate(out) + 3 H(+)(out) = glycyl-L-glutamate(in) + 3 H(+)(in). The catalysed reaction is L-alanyl-L-alanine(out) + 2 H(+)(out) = L-alanyl-L-alanine(in) + 2 H(+)(in). It carries out the reaction an L-amino acid tripeptide(out) + 2 H(+)(out) = an L-amino acid tripeptide(in) + 2 H(+)(in). It catalyses the reaction carnosine(out) + 2 H(+)(out) = carnosine(in) + 2 H(+)(in). In terms of biological role, proton-coupled amino-acid transporter that transports oligopeptides of 2 to 4 amino acids with a preference for dipeptides. Transports neutral and anionic dipeptides with a proton to peptide stoichiometry of 2:1 or 3:1. In kidney, involved in the absorption of circulating di- and tripeptides from the glomerular filtrate. Can also transport beta-lactam antibiotics, such as the aminocephalosporin cefadroxil, and other antiviral and anticancer drugs. Transports the dipeptide-like aminopeptidase inhibitor bestatin. Also able to transport carnosine. Involved in innate immunity by promoting the detection of microbial pathogens by NOD-like receptors (NLRs). Mediates transport of bacterial peptidoglycans across the plasma membrane or, in macrophages, the phagosome membrane: catalyzes the transport of certain bacterial peptidoglycans, such as muramyl dipeptide (MDP), the NOD2 ligand. This Mus musculus (Mouse) protein is Solute carrier family 15 member 2.